The chain runs to 252 residues: Tumor necrosis factor ligand superfamily member 15 (252 aa).

Topologically, residues 1–39 (MAEELGLGFGEGVPVEVLPEGCRHRPEARAGLAARSKAC) are cytoplasmic. Residues 40–60 (LALTCCLLSFPILAGLSTLLM) form a helical; Signal-anchor for type II membrane protein membrane-spanning segment. Residues 61-252 (AGQLRVPGKD…DKTFFGAFLL (192 aa)) are Extracellular-facing. In terms of domain architecture, THD spans 96–252 (PRAHLTIKKQ…DKTFFGAFLL (157 aa)). Asparagine 137 carries an N-linked (GlcNAc...) asparagine glycan. An intrachain disulfide couples cysteine 163 to cysteine 203. The N-linked (GlcNAc...) asparagine glycan is linked to asparagine 230.

Belongs to the tumor necrosis factor family. As to quaternary structure, homotrimer.

It localises to the membrane. Receptor for TNFRSF25 and TNFRSF6B. Mediates activation of NF-kappa-B. Inhibits vascular endothelial growth and angiogenesis (in vitro). Promotes activation of caspases and apoptosis. Promotes splenocyte alloactivation. In Mus musculus (Mouse), this protein is Tumor necrosis factor ligand superfamily member 15 (Tnfsf15).